The following is a 287-amino-acid chain: L-cysteine S-thiosulfotransferase subunit SoxA (287 aa).

Positions 1-26 (MKTMTGRLVAAALVCGGAFSGAAVSA) are cleaved as a signal peptide. The Cytochrome c domain maps to 74-168 (DDFENSGMVF…AMVALIASVS (95 aa)). Residues cysteine 102, cysteine 105, histidine 106, cysteine 140, cysteine 203, cysteine 206, and histidine 207 each coordinate heme c. Arginine 244 is a substrate binding site. Heme c is bound at residue cysteine 248. Cysteine 248 acts as the Cysteine persulfide intermediate in catalysis.

The protein belongs to the SoxA family. As to quaternary structure, heterodimer of SoxA and SoxX. Heme c serves as cofactor. Cysteine persulfide at Cys-248.

It is found in the periplasm. It carries out the reaction L-cysteinyl-[SoxY protein] + thiosulfate + 2 Fe(III)-[cytochrome c] = S-sulfosulfanyl-L-cysteinyl-[SoxY protein] + 2 Fe(II)-[cytochrome c] + 2 H(+). The enzyme catalyses S-sulfanyl-L-cysteinyl-[SoxY protein] + thiosulfate + 2 Fe(III)-[cytochrome c] = S-(2-sulfodisulfanyl)-L-cysteinyl-[SoxY protein] + 2 Fe(II)-[cytochrome c] + 2 H(+). In terms of biological role, C-type diheme cytochrome, which is part of the SoxAX cytochrome complex involved in sulfur oxidation. The SoxAX complex catalyzes the formation of a heterodisulfide bond between the conserved cysteine residue on a sulfur carrier SoxYZ complex subunit SoxY and thiosulfate or other inorganic sulfur substrates. This leads to the liberation of two electrons, which may be transferred from the SoxAX complex to another cytochrome c and which then may be used for reductive CO(2) fixation. This Rhodovulum sulfidophilum (Rhodobacter sulfidophilus) protein is L-cysteine S-thiosulfotransferase subunit SoxA.